A 165-amino-acid polypeptide reads, in one-letter code: Large ribosomal subunit protein uL11A (165 aa).

Arg67 is subject to N5-methylarginine.

The protein belongs to the universal ribosomal protein uL11 family. Component of the large ribosomal subunit (LSU). Mature yeast ribosomes consist of a small (40S) and a large (60S) subunit. The 40S small subunit contains 1 molecule of ribosomal RNA (18S rRNA) and at least 33 different proteins. The large 60S subunit contains 3 rRNA molecules (25S, 5.8S and 5S rRNA) and at least 46 different proteins.

Its subcellular location is the cytoplasm. The protein resides in the nucleus. It localises to the nucleolus. Its function is as follows. This protein binds directly to 26S ribosomal RNA. In terms of biological role, component of the ribosome, a large ribonucleoprotein complex responsible for the synthesis of proteins in the cell. The small ribosomal subunit (SSU) binds messenger RNAs (mRNAs) and translates the encoded message by selecting cognate aminoacyl-transfer RNA (tRNA) molecules. The large subunit (LSU) contains the ribosomal catalytic site termed the peptidyl transferase center (PTC), which catalyzes the formation of peptide bonds, thereby polymerizing the amino acids delivered by tRNAs into a polypeptide chain. The nascent polypeptides leave the ribosome through a tunnel in the LSU and interact with protein factors that function in enzymatic processing, targeting, and the membrane insertion of nascent chains at the exit of the ribosomal tunnel. The protein is Large ribosomal subunit protein uL11A (rpl1201) of Schizosaccharomyces pombe (strain 972 / ATCC 24843) (Fission yeast).